The chain runs to 325 residues: UPF0285 protein MM_0679 (325 aa).

Belongs to the UPF0285 family.

The sequence is that of UPF0285 protein MM_0679 from Methanosarcina mazei (strain ATCC BAA-159 / DSM 3647 / Goe1 / Go1 / JCM 11833 / OCM 88) (Methanosarcina frisia).